Consider the following 236-residue polypeptide: Small ribosomal subunit protein uS2c (236 aa).

This sequence belongs to the universal ribosomal protein uS2 family.

The protein resides in the plastid. Its subcellular location is the chloroplast. This chain is Small ribosomal subunit protein uS2c (rps2), found in Pisum sativum (Garden pea).